The chain runs to 134 residues: UPF0412 protein YaaI (134 aa).

The first 23 residues, 1–23, serve as a signal peptide directing secretion; it reads MKSVFTLSASLAISLLLCCTAQA.

Belongs to the UPF0412 family.

The protein is UPF0412 protein YaaI of Escherichia coli O7:K1 (strain IAI39 / ExPEC).